Reading from the N-terminus, the 102-residue chain is NADH-quinone oxidoreductase subunit K (102 aa).

The next 3 membrane-spanning stretches (helical) occupy residues leucine 5–leucine 25, isoleucine 30–alanine 50, and isoleucine 62–leucine 82.

The protein belongs to the complex I subunit 4L family. In terms of assembly, NDH-1 is composed of 14 different subunits. Subunits NuoA, H, J, K, L, M, N constitute the membrane sector of the complex.

The protein resides in the cell inner membrane. It catalyses the reaction a quinone + NADH + 5 H(+)(in) = a quinol + NAD(+) + 4 H(+)(out). NDH-1 shuttles electrons from NADH, via FMN and iron-sulfur (Fe-S) centers, to quinones in the respiratory chain. The immediate electron acceptor for the enzyme in this species is believed to be ubiquinone. Couples the redox reaction to proton translocation (for every two electrons transferred, four hydrogen ions are translocated across the cytoplasmic membrane), and thus conserves the redox energy in a proton gradient. The sequence is that of NADH-quinone oxidoreductase subunit K from Beijerinckia indica subsp. indica (strain ATCC 9039 / DSM 1715 / NCIMB 8712).